The sequence spans 428 residues: Histidine--tRNA ligase (428 aa).

Belongs to the class-II aminoacyl-tRNA synthetase family. In terms of assembly, homodimer.

It is found in the cytoplasm. The enzyme catalyses tRNA(His) + L-histidine + ATP = L-histidyl-tRNA(His) + AMP + diphosphate + H(+). This Lactobacillus gasseri (strain ATCC 33323 / DSM 20243 / BCRC 14619 / CIP 102991 / JCM 1131 / KCTC 3163 / NCIMB 11718 / NCTC 13722 / AM63) protein is Histidine--tRNA ligase.